The primary structure comprises 366 residues: Left-right determination factor 1 (366 aa).

An N-terminal signal peptide occupies residues 1–21 (MQPLWLCWALWVLPLASPGAA). The propeptide at 22 to 76 (LTGEQLLGSLLRQLQLKEVPTLDRADMEELVIPTHVRAQYVALLQRSHGDRSRGK) is or 135. Residue Asn158 is glycosylated (N-linked (GlcNAc...) asparagine). 4 disulfides stabilise this stretch: Cys251/Cys264, Cys263/Cys316, Cys293/Cys351, and Cys297/Cys353.

The protein belongs to the TGF-beta family. In terms of processing, the processing of the protein may also occur at the second R-X-X-R site located at AA 132-135. Processing appears to be regulated in a cell-type specific manner.

The protein resides in the secreted. Functionally, required for left-right axis determination as a regulator of LEFTY2 and NODAL. The polypeptide is Left-right determination factor 1 (LEFTY1) (Homo sapiens (Human)).